A 698-amino-acid chain; its full sequence is Dolichyl-diphosphooligosaccharide--protein glycosyltransferase subunit 2 (698 aa).

The signal sequence occupies residues 1–29 (MAAAGGLPASATLLLLVIAAVAVAPLASA). Residues 30–600 (VRPVSDAHRS…RSPEKRPPKE (571 aa)) are Lumenal-facing. Residues 601–621 (LSFAFTGLTLLPIVGFLIGLM) traverse the membrane as a helical segment. The Cytoplasmic portion of the chain corresponds to 622 to 638 (RLGVNLKNFPSLPAPAA). A helical transmembrane segment spans residues 639-659 (FASLFHAGIGAVLLLYVLFWI). A topological domain (lumenal) is located at residue Lys-660. The chain crosses the membrane as a helical span at residues 661 to 681 (LDLFTTLKYLSFLGVFLVFVG). Topologically, residues 682–698 (HRALSYLSSTSAKQKTA) are cytoplasmic.

Belongs to the SWP1 family. Component of the oligosaccharyltransferase (OST) complex.

It is found in the endoplasmic reticulum membrane. It functions in the pathway protein modification; protein glycosylation. Subunit of the oligosaccharyl transferase (OST) complex that catalyzes the initial transfer of a defined glycan (Glc(3)Man(9)GlcNAc(2) in eukaryotes) from the lipid carrier dolichol-pyrophosphate to an asparagine residue within an Asn-X-Ser/Thr consensus motif in nascent polypeptide chains, the first step in protein N-glycosylation. N-glycosylation occurs cotranslationally and the complex associates with the Sec61 complex at the channel-forming translocon complex that mediates protein translocation across the endoplasmic reticulum (ER). All subunits are required for a maximal enzyme activity. The sequence is that of Dolichyl-diphosphooligosaccharide--protein glycosyltransferase subunit 2 (RPN2) from Oryza sativa subsp. japonica (Rice).